Consider the following 528-residue polypeptide: Protein spinster homolog 1 (528 aa).

Positions 1-44 are disordered; sequence MSGSDTAPFLSQADDTDDGPAPGTPGLPGSMGNPKSEDPAVPDQ. The next 12 membrane-spanning stretches (helical) occupy residues 50 to 70, 98 to 118, 126 to 146, 160 to 180, 187 to 207, 218 to 238, 278 to 298, 323 to 343, 357 to 377, 381 to 401, 421 to 441, and 465 to 485; these read ITGL…YINL, GLIQ…FGYL, YLMC…SFIP, VGVG…DLFV, MLSV…IAGS, WALR…FLVV, LGFT…PAFL, LIFG…GVEI, LVCA…LACA, IVAT…NWAI, FQIV…IGSI, and MLCA…AIFI. S518 carries the phosphoserine modification.

The protein belongs to the major facilitator superfamily. Spinster (TC 2.A.1.49) family. In terms of assembly, interacts with BCL2 and BCL2L1.

It is found in the lysosome membrane. The enzyme catalyses a 1-acyl-sn-glycero-3-phosphocholine(out) + H(+)(out) = a 1-acyl-sn-glycero-3-phosphocholine(in) + H(+)(in). It carries out the reaction 1-hexadecanoyl-sn-glycero-3-phosphocholine(out) + H(+)(out) = 1-hexadecanoyl-sn-glycero-3-phosphocholine(in) + H(+)(in). It catalyses the reaction 1-(9Z-octadecenoyl)-sn-glycero-3-phosphocholine(out) + H(+)(out) = 1-(9Z-octadecenoyl)-sn-glycero-3-phosphocholine(in) + H(+)(in). The catalysed reaction is 1-(5Z,8Z,11Z,14Z-eicosatetraenoyl)-sn-glycero-3-phosphocholine(out) + H(+)(out) = 1-(5Z,8Z,11Z,14Z-eicosatetraenoyl)-sn-glycero-3-phosphocholine(in) + H(+)(in). The enzyme catalyses 1-(4Z,7Z,10Z,13Z,16Z,19Z-docosahexaenoyl)-sn-glycero-3-phosphocholine(out) + H(+)(out) = 1-(4Z,7Z,10Z,13Z,16Z,19Z-docosahexaenoyl)-sn-glycero-3-phosphocholine(in) + H(+)(in). It carries out the reaction a 1-acyl-sn-glycero-3-phosphoethanolamine(out) + H(+)(out) = a 1-acyl-sn-glycero-3-phosphoethanolamine(in) + H(+)(in). It catalyses the reaction 1-(9Z-octadecenoyl)-sn-glycero-3-phosphoethanolamine(out) + H(+)(out) = 1-(9Z-octadecenoyl)-sn-glycero-3-phosphoethanolamine(in) + H(+)(in). The catalysed reaction is 1-acyl-sn-glycero-3-phospho-(1'-sn-glycerol)(out) + H(+)(out) = 1-acyl-sn-glycero-3-phospho-(1'-sn-glycerol)(in) + H(+)(in). The enzyme catalyses 1-(9Z-octadecenoyl)-sn-glycero-3-phospho-(1'-sn-glycerol)(out) + H(+)(out) = 1-(9Z-octadecenoyl)-sn-glycero-3-phospho-(1'-sn-glycerol)(in) + H(+)(in). It carries out the reaction a 1-O-(1Z-alkenyl)-sn-glycero-3-phosphocholine(out) + H(+)(out) = a 1-O-(1Z-alkenyl)-sn-glycero-3-phosphocholine(in) + H(+)(in). It catalyses the reaction 1-(1Z-hexadecenyl)-sn-glycero-3-phosphocholine(out) + H(+)(out) = 1-(1Z-hexadecenyl)-sn-glycero-3-phosphocholine(in) + H(+)(in). The catalysed reaction is a 1-O-(1Z-alkenyl)-sn-glycero-3-phosphoethanolamine(out) + H(+)(out) = a 1-O-(1Z-alkenyl)-sn-glycero-3-phosphoethanolamine(in) + H(+)(in). The enzyme catalyses 1-O-(1Z-hexadecenyl)-sn-glycero-3-phosphoethanolamine(out) + H(+)(out) = 1-O-(1Z-hexadecenyl)-sn-glycero-3-phosphoethanolamine(in) + H(+)(in). Its function is as follows. Plays a critical role in the phospholipid salvage pathway from lysosomes to the cytosol. Mediates the rate-limiting, proton-dependent, lysosomal efflux of lysophospholipids, which can then be reacylated by acyltransferases in the endoplasmic reticulum to form phospholipids. Selective for zwitterionic headgroups such as lysophosphatidylcholine (LPC) and lysophosphatidylethanolamine (LPE), can also transport lysophosphatidylglycerol (LPG), but not other anionic lysophospholipids, sphingosine, nor sphingomyelin. Transports lysophospholipids with saturated, monounsaturated, and polyunsaturated fatty acids, such as 1-hexadecanoyl-sn-glycero-3-phosphocholine, 1-(9Z-octadecenoyl)-sn-glycero-3-phosphocholine and 1-(4Z,7Z,10Z,13Z,16Z,19Z-docosahexaenoyl)-sn-glycero-3-phosphocholine, respectively. Can also transport lysoplasmalogen (LPC with a fatty alcohol) such as 1-(1Z-hexadecenyl)-sn-glycero-3-phosphocholine. Essential player in lysosomal homeostasis. Crucial for cell survival under conditions of nutrient limitation. May be involved in necrotic or autophagic cell death. The sequence is that of Protein spinster homolog 1 (SPNS1) from Bos taurus (Bovine).